The sequence spans 165 residues: 3-hydroxyacyl-[acyl-carrier-protein] dehydratase FabZ (165 aa).

His-64 is an active-site residue.

Belongs to the thioester dehydratase family. FabZ subfamily.

The protein localises to the cytoplasm. It carries out the reaction a (3R)-hydroxyacyl-[ACP] = a (2E)-enoyl-[ACP] + H2O. Functionally, involved in unsaturated fatty acids biosynthesis. Catalyzes the dehydration of short chain beta-hydroxyacyl-ACPs and long chain saturated and unsaturated beta-hydroxyacyl-ACPs. This Acidiphilium cryptum (strain JF-5) protein is 3-hydroxyacyl-[acyl-carrier-protein] dehydratase FabZ.